A 163-amino-acid polypeptide reads, in one-letter code: Cytochrome c-type biogenesis protein CcmE (163 aa).

At 1–8 (MNPRRKKR) the chain is on the cytoplasmic side. A helical; Signal-anchor for type II membrane protein transmembrane segment spans residues 9 to 29 (LTIILAISAGLAAVIGLVLYA). The Periplasmic portion of the chain corresponds to 30–163 (LSQNIDLFYT…TEAQLKGAKQ (134 aa)). Heme-binding residues include histidine 131 and tyrosine 135.

This sequence belongs to the CcmE/CycJ family.

The protein resides in the cell inner membrane. Heme chaperone required for the biogenesis of c-type cytochromes. Transiently binds heme delivered by CcmC and transfers the heme to apo-cytochromes in a process facilitated by CcmF and CcmH. The chain is Cytochrome c-type biogenesis protein CcmE from Aeromonas salmonicida (strain A449).